The following is a 192-amino-acid chain: Superoxide dismutase [Fe] (192 aa).

His-27, His-74, Asp-157, and His-161 together coordinate Fe cation.

This sequence belongs to the iron/manganese superoxide dismutase family. In terms of assembly, homodimer. Fe cation serves as cofactor.

The catalysed reaction is 2 superoxide + 2 H(+) = H2O2 + O2. Destroys superoxide anion radicals which are normally produced within the cells and which are toxic to biological systems. In Bordetella pertussis (strain Tohama I / ATCC BAA-589 / NCTC 13251), this protein is Superoxide dismutase [Fe] (sodB).